Here is a 240-residue protein sequence, read N- to C-terminus: 1-(5-phosphoribosyl)-5-[(5-phosphoribosylamino)methylideneamino] imidazole-4-carboxamide isomerase (240 aa).

D8 (proton acceptor) is an active-site residue. Residue D130 is the Proton donor of the active site.

It belongs to the HisA/HisF family.

It is found in the cytoplasm. It catalyses the reaction 1-(5-phospho-beta-D-ribosyl)-5-[(5-phospho-beta-D-ribosylamino)methylideneamino]imidazole-4-carboxamide = 5-[(5-phospho-1-deoxy-D-ribulos-1-ylimino)methylamino]-1-(5-phospho-beta-D-ribosyl)imidazole-4-carboxamide. The protein operates within amino-acid biosynthesis; L-histidine biosynthesis; L-histidine from 5-phospho-alpha-D-ribose 1-diphosphate: step 4/9. The chain is 1-(5-phosphoribosyl)-5-[(5-phosphoribosylamino)methylideneamino] imidazole-4-carboxamide isomerase from Flavobacterium johnsoniae (strain ATCC 17061 / DSM 2064 / JCM 8514 / BCRC 14874 / CCUG 350202 / NBRC 14942 / NCIMB 11054 / UW101) (Cytophaga johnsonae).